A 115-amino-acid polypeptide reads, in one-letter code: NADH-ubiquinone oxidoreductase chain 3 (115 aa).

Transmembrane regions (helical) follow at residues 4-24, 55-75, and 86-106; these read IMVISVNIILSSTLILVAFWL, FFLVAITFLLFDLEIALLLPI, and TMMLTAFILVSILALGLAYEW.

Belongs to the complex I subunit 3 family. Core subunit of respiratory chain NADH dehydrogenase (Complex I) which is composed of 45 different subunits. Interacts with TMEM186. Interacts with TMEM242.

The protein resides in the mitochondrion inner membrane. The enzyme catalyses a ubiquinone + NADH + 5 H(+)(in) = a ubiquinol + NAD(+) + 4 H(+)(out). Core subunit of the mitochondrial membrane respiratory chain NADH dehydrogenase (Complex I) which catalyzes electron transfer from NADH through the respiratory chain, using ubiquinone as an electron acceptor. Essential for the catalytic activity of complex I. The sequence is that of NADH-ubiquinone oxidoreductase chain 3 from Baiomys taylori (Northern pygmy mouse).